We begin with the raw amino-acid sequence, 448 residues long: Methylenetetrahydrofolate--tRNA-(uracil-5-)-methyltransferase TrmFO (448 aa).

Residue 13–18 (GAGLAG) participates in FAD binding.

This sequence belongs to the MnmG family. TrmFO subfamily. FAD serves as cofactor.

The protein resides in the cytoplasm. It catalyses the reaction uridine(54) in tRNA + (6R)-5,10-methylene-5,6,7,8-tetrahydrofolate + NADH + H(+) = 5-methyluridine(54) in tRNA + (6S)-5,6,7,8-tetrahydrofolate + NAD(+). It carries out the reaction uridine(54) in tRNA + (6R)-5,10-methylene-5,6,7,8-tetrahydrofolate + NADPH + H(+) = 5-methyluridine(54) in tRNA + (6S)-5,6,7,8-tetrahydrofolate + NADP(+). Functionally, catalyzes the folate-dependent formation of 5-methyl-uridine at position 54 (M-5-U54) in all tRNAs. This is Methylenetetrahydrofolate--tRNA-(uracil-5-)-methyltransferase TrmFO from Streptococcus pyogenes serotype M1.